Here is a 270-residue protein sequence, read N- to C-terminus: Cell surface glycoprotein CD200 receptor 5 (270 aa).

Residues 1–25 form the signal peptide; it reads MHALGRTPALTLLIFINIFVSGSRC. Over 26-241 the chain is Extracellular; the sequence is TDKNQTIQND…STTTTTSLLT (216 aa). An Ig-like V-type domain is found at 39-145; the sequence is PLTQVNTTVS…GNFGRVYDLQ (107 aa). A glycan (N-linked (GlcNAc...) asparagine) is linked at asparagine 44. Intrachain disulfides connect cysteine 59–cysteine 129 and cysteine 164–cysteine 213. In terms of domain architecture, Ig-like C2-type spans 134 to 229; the sequence is PEGNFGRVYD…GNKSLFIELN (96 aa). 2 N-linked (GlcNAc...) asparagine glycosylation sites follow: asparagine 192 and asparagine 221. A helical membrane pass occupies residues 242–262; that stretch reads ILYVKMVLLGIILLHVGFAFF. Topologically, residues 263 to 270 are cytoplasmic; it reads QKRNVIRT.

The protein belongs to the CD200R family.

Its subcellular location is the membrane. In terms of biological role, may not be a receptor for the CD200/OX2 cell surface glycoprotein. This chain is Cell surface glycoprotein CD200 receptor 5 (Cd200r5), found in Mus musculus (Mouse).